The primary structure comprises 193 residues: Small ribosomal subunit protein eS7 (193 aa).

It belongs to the eukaryotic ribosomal protein eS7 family.

This chain is Small ribosomal subunit protein eS7 (rps7), found in Dictyostelium discoideum (Social amoeba).